Reading from the N-terminus, the 60-residue chain is uncharacterized protein (60 aa).

The chain crosses the membrane as a helical span at residues 14-34 (MLFLGTIGLAVVVGGLMAYGY). The tract at residues 38–60 (GKTPSSGTSFHTASPSFSSRYRY) is disordered. The span at 40–60 (TPSSGTSFHTASPSFSSRYRY) shows a compositional bias: polar residues.

It is found in the host membrane. This is an uncharacterized protein from Dryophytes versicolor (chameleon treefrog).